The following is a 292-amino-acid chain: MTSSAGQRISCNVVETRRDDVARIFNIQRYSLNDGEGIRTVVFFKGCPHLCPWCANPESISGKIQTVRREAKCLHCAKCLRDADECPSGAFERIGRDISLDALEREVMKDDIFFRTSGGGVTLSGGEVLMQAEFATRFLQRLRLWGVSCAIETAGDAPASKLLPLAKLCDEVLFDLKIMDATQARDVVKMNLPRVLENLRLLVSEGVNVIPRLPLIPGFTLSRENMQQALDVLIPLNIRQIHLLPFHQYGEPKYRLLGKTWSMKEVPAPSSADVATMREMAERAGLQVTVGG.

A Radical SAM core domain is found at 33–287 (NDGEGIRTVV…REMAERAGLQ (255 aa)). [4Fe-4S] cluster contacts are provided by C47, C51, and C54. An S-adenosyl-L-methionine-binding site is contributed by 53 to 55 (WCA). The 4Fe-4S ferredoxin-type domain occupies 62-96 (GKIQTVRREAKCLHCAKCLRDADECPSGAFERIGR). S-adenosyl-L-methionine-binding positions include G126, 175-177 (DLK), and H247.

It belongs to the organic radical-activating enzymes family. [4Fe-4S] cluster serves as cofactor.

Its subcellular location is the cytoplasm. It catalyses the reaction glycyl-[formate C-acetyltransferase] + reduced [flavodoxin] + S-adenosyl-L-methionine = glycin-2-yl radical-[formate C-acetyltransferase] + semiquinone [flavodoxin] + 5'-deoxyadenosine + L-methionine + H(+). Its function is as follows. Activation of pyruvate formate-lyase 2 under anaerobic conditions by generation of an organic free radical, using S-adenosylmethionine and reduced flavodoxin as cosubstrates to produce 5'-deoxy-adenosine. This is Pyruvate formate-lyase 2-activating enzyme (pflC) from Escherichia coli (strain K12).